The sequence spans 465 residues: Type II restriction enzyme BsuMI component YdjA (465 aa).

In terms of assembly, bsuMI restriction activity requires YdiR, YdiS and YdjA.

The enzyme catalyses Endonucleolytic cleavage of DNA to give specific double-stranded fragments with terminal 5'-phosphates.. Its function is as follows. A P subtype restriction enzyme that recognizes the double-stranded sequence 5'-CTCGAG-3'; the cleavage site is unknown. This chain is Type II restriction enzyme BsuMI component YdjA (ydjA), found in Bacillus subtilis (strain 168).